Here is a 92-residue protein sequence, read N- to C-terminus: Small ribosomal subunit protein uS19 (92 aa).

It belongs to the universal ribosomal protein uS19 family.

Functionally, protein S19 forms a complex with S13 that binds strongly to the 16S ribosomal RNA. This chain is Small ribosomal subunit protein uS19, found in Brucella ovis (strain ATCC 25840 / 63/290 / NCTC 10512).